The chain runs to 132 residues: Small ribosomal subunit protein uS8 (132 aa).

This sequence belongs to the universal ribosomal protein uS8 family. Part of the 30S ribosomal subunit. Contacts proteins S5 and S12.

Functionally, one of the primary rRNA binding proteins, it binds directly to 16S rRNA central domain where it helps coordinate assembly of the platform of the 30S subunit. This is Small ribosomal subunit protein uS8 from Streptococcus gordonii (strain Challis / ATCC 35105 / BCRC 15272 / CH1 / DL1 / V288).